The primary structure comprises 394 residues: Glycerol-1-phosphate dehydrogenase [NAD(P)+] (394 aa).

Residues Asp54, 116–120, and 138–141 each bind NAD(+); these read GTIHD and TAPS. Asp143 is a substrate binding site. Ser147 lines the NAD(+) pocket. Position 190 (Asp190) interacts with substrate. The Ni(2+) site is built by Asp190 and His270. His274 is a binding site for substrate. His290 lines the Ni(2+) pocket.

It belongs to the glycerol-1-phosphate dehydrogenase family. In terms of assembly, homodimer. It depends on Ni(2+) as a cofactor.

It localises to the cytoplasm. The enzyme catalyses sn-glycerol 1-phosphate + NAD(+) = dihydroxyacetone phosphate + NADH + H(+). It carries out the reaction sn-glycerol 1-phosphate + NADP(+) = dihydroxyacetone phosphate + NADPH + H(+). In terms of biological role, catalyzes the NAD(P)H-dependent reduction of dihydroxyacetonephosphate (DHAP or glycerone phosphate) to glycerol 1-phosphate (G1P). The G1P thus generated is probably used for the synthesis of phosphoglycerolipids in Gram-positive bacterial species. The polypeptide is Glycerol-1-phosphate dehydrogenase [NAD(P)+] (Bacillus velezensis (strain DSM 23117 / BGSC 10A6 / LMG 26770 / FZB42) (Bacillus amyloliquefaciens subsp. plantarum)).